Reading from the N-terminus, the 26-residue chain is Ribulose bisphosphate carboxylase large chain (26 aa).

Residues 1–2 (MS) constitute a propeptide that is removed on maturation. Pro3 is modified (N-acetylproline).

The protein belongs to the RuBisCO large chain family. Type I subfamily. In terms of assembly, heterohexadecamer of 8 large chains and 8 small chains.

It localises to the plastid. The protein resides in the chloroplast. The enzyme catalyses 2 (2R)-3-phosphoglycerate + 2 H(+) = D-ribulose 1,5-bisphosphate + CO2 + H2O. It carries out the reaction D-ribulose 1,5-bisphosphate + O2 = 2-phosphoglycolate + (2R)-3-phosphoglycerate + 2 H(+). RuBisCO catalyzes two reactions: the carboxylation of D-ribulose 1,5-bisphosphate, the primary event in carbon dioxide fixation, as well as the oxidative fragmentation of the pentose substrate in the photorespiration process. Both reactions occur simultaneously and in competition at the same active site. The chain is Ribulose bisphosphate carboxylase large chain (rbcL) from Vicia faba (Broad bean).